We begin with the raw amino-acid sequence, 377 residues long: Nitric oxide reductase FlRd-NAD(+) reductase (377 aa).

The protein belongs to the FAD-dependent oxidoreductase family. FAD is required as a cofactor.

The protein resides in the cytoplasm. The enzyme catalyses 2 reduced [nitric oxide reductase rubredoxin domain] + NAD(+) + H(+) = 2 oxidized [nitric oxide reductase rubredoxin domain] + NADH. The protein operates within nitrogen metabolism; nitric oxide reduction. Functionally, one of at least two accessory proteins for anaerobic nitric oxide (NO) reductase. Reduces the rubredoxin moiety of NO reductase. The polypeptide is Nitric oxide reductase FlRd-NAD(+) reductase (Shigella boydii serotype 18 (strain CDC 3083-94 / BS512)).